We begin with the raw amino-acid sequence, 269 residues long: Malonyl-[acyl-carrier protein] O-methyltransferase (269 aa).

This sequence belongs to the methyltransferase superfamily.

The catalysed reaction is malonyl-[ACP] + S-adenosyl-L-methionine = malonyl-[ACP] methyl ester + S-adenosyl-L-homocysteine. It participates in cofactor biosynthesis; biotin biosynthesis. In terms of biological role, converts the free carboxyl group of a malonyl-thioester to its methyl ester by transfer of a methyl group from S-adenosyl-L-methionine (SAM). It allows to synthesize pimeloyl-ACP via the fatty acid synthetic pathway. This Bacillus cereus (strain ATCC 14579 / DSM 31 / CCUG 7414 / JCM 2152 / NBRC 15305 / NCIMB 9373 / NCTC 2599 / NRRL B-3711) protein is Malonyl-[acyl-carrier protein] O-methyltransferase.